Consider the following 1175-residue polypeptide: Beta-agarase AgaO (1175 aa).

The first 29 residues, 1 to 29, serve as a signal peptide directing secretion; it reads MRLSKSQGILPLAHAVLAAAIAYSTAATA. Positions 32-164 constitute a CBM6 1 domain; the sequence is YRLEAEDFTN…QWNLDKMELA (133 aa). A disordered region spans residues 169–208; sequence SSSSSGGGSTSSSSSGGSSSSSGSGSSSSGGSPEEGGHVS. The segment covering 178-200 has biased composition (low complexity); sequence TSSSSSGGSSSSSGSGSSSSGGS. In terms of domain architecture, CBM6 2 spans 211 to 339; the sequence is FKLEAESAHH…QFNIDYVIFE (129 aa). Residues 355–481 form a disordered region; the sequence is IADVNDSCPG…ESGCSPSQVA (127 aa). A compositionally biased stretch (basic and acidic residues) spans 382–393; the sequence is DTDKDGIADNRD. Residues 471–481 show a composition bias toward polar residues; that stretch reads NESGCSPSQVA. Catalysis depends on Glu-661, which acts as the Proton donor. The active-site Nucleophile is Glu-832.

Belongs to the glycosyl hydrolase 86 family.

It catalyses the reaction Hydrolysis of (1-&gt;4)-beta-D-galactosidic linkages in agarose, giving the tetramer as the predominant product.. With respect to regulation, activity and stability are strongly enhanced by CaCl(2). Activity is not affected by sulfhydryl inhibitors such as iodoacetoamide and p-chloromercuribenzoate or by thiol reagents such as dithiothreitol and 2-mercaptoethanol. Strongly inhibited by N-bromosuccinimide and sodium dodecyl sulfate. In terms of biological role, endo-type beta-agarase, which degrades agarose and agarose oligosaccharides more polymerized than hexamers to yield neoagarohexaose (NA6) as the main product, with lesser amounts of neoagarotetraose (NA4) and neoagarobiose (NA2). The sequence is that of Beta-agarase AgaO from Microbulbifer thermotolerans.